The sequence spans 557 residues: T-complex protein 1 subunit eta (557 aa).

At Ala-2 the chain carries N-acetylalanine. A disordered region spans residues 529-557 (PKSESAQGDAAGAMGRGRGGGRGRGMRRR). Residues 547–557 (GGGRGRGMRRR) are compositionally biased toward basic residues.

Belongs to the TCP-1 chaperonin family. In terms of assembly, heterooligomeric complex of about 850 to 900 kDa that forms two stacked rings, 12 to 16 nm in diameter. Interacts with KNAT1.

The protein resides in the cytoplasm. Functionally, molecular chaperone; assists the folding of proteins upon ATP hydrolysis. Known to play a role, in vitro, in the folding of actin and tubulin. This Arabidopsis thaliana (Mouse-ear cress) protein is T-complex protein 1 subunit eta.